Reading from the N-terminus, the 574-residue chain is Septation ring formation regulator EzrA (574 aa).

Residues 1–7 (MSSGIIL) lie on the Extracellular side of the membrane. The helical transmembrane segment at 8 to 26 (LIVAIVLLVIIAYLVGVII) threads the bilayer. Over 27-574 (RKRNDSLITS…YEKTREHIRF (548 aa)) the chain is Cytoplasmic. Coiled coils occupy residues 102 to 141 (NFIR…EEKN), 274 to 350 (ELVT…ETES), and 459 to 520 (QLEA…SFEA).

The protein belongs to the EzrA family.

It localises to the cell membrane. Its function is as follows. Negative regulator of FtsZ ring formation; modulates the frequency and position of FtsZ ring formation. Inhibits FtsZ ring formation at polar sites. Interacts either with FtsZ or with one of its binding partners to promote depolymerization. This is Septation ring formation regulator EzrA from Streptococcus pyogenes serotype M3 (strain SSI-1).